The sequence spans 499 residues: Probable cytosol aminopeptidase (499 aa).

Residues Lys267 and Asp272 each contribute to the Mn(2+) site. Lys279 is a catalytic residue. The Mn(2+) site is built by Asp290, Asp349, and Glu351. Residue Arg353 is part of the active site.

The protein belongs to the peptidase M17 family. It depends on Mn(2+) as a cofactor.

Its subcellular location is the cytoplasm. It catalyses the reaction Release of an N-terminal amino acid, Xaa-|-Yaa-, in which Xaa is preferably Leu, but may be other amino acids including Pro although not Arg or Lys, and Yaa may be Pro. Amino acid amides and methyl esters are also readily hydrolyzed, but rates on arylamides are exceedingly low.. It carries out the reaction Release of an N-terminal amino acid, preferentially leucine, but not glutamic or aspartic acids.. Its function is as follows. Presumably involved in the processing and regular turnover of intracellular proteins. Catalyzes the removal of unsubstituted N-terminal amino acids from various peptides. The chain is Probable cytosol aminopeptidase from Buchnera aphidicola subsp. Acyrthosiphon pisum (strain 5A).